A 158-amino-acid polypeptide reads, in one-letter code: Arginine repressor (158 aa).

It belongs to the ArgR family.

The protein resides in the cytoplasm. The protein operates within amino-acid biosynthesis; L-arginine biosynthesis [regulation]. Functionally, regulates arginine biosynthesis genes. In Anaeromyxobacter sp. (strain Fw109-5), this protein is Arginine repressor.